We begin with the raw amino-acid sequence, 358 residues long: MPAHMLQEISSSYTTTTTITEPPSGNLQNGREKMKKVPLYLEEDIRPEMREDIHDPSYQDEEGPPPKLEYVWRNIILMALLHVGALYGITLIPSSKVYTLLWGIFYYLISALGITAGAHRLWSHRTYKARLPLRIFLIIANTMAFQNDVYEWARDHRAHHKFSETHADPHNSRRGFFFSHVGWLLVRKHPAVKEKGGKLDMSDLKAEKLVMFQRRYYKPGLLLMCFILPTLVPWYCWGETFLHSLFVSTFLRYTLVLNATWLVNSAAHLYGYRPYDKNIQSRENILVSLGAVGEGFHNYHHAFPYDYSASEYRWHINFTTFFIDCMAALGLAYDRKKVSKAAVLARIKRTGDGSHKSS.

The Cytoplasmic portion of the chain corresponds to 1-71; sequence MPAHMLQEIS…EGPPPKLEYV (71 aa). A compositionally biased stretch (low complexity) spans 8–24; sequence EISSSYTTTTTITEPPS. Residues 8-33 form a disordered region; sequence EISSSYTTTTTITEPPSGNLQNGREK. A helical membrane pass occupies residues 72-92; that stretch reads WRNIILMALLHVGALYGITLI. Substrate is bound at residue Asn-74. The Lumenal portion of the chain corresponds to 93 to 96; sequence PSSK. A helical transmembrane segment spans residues 97–117; the sequence is VYTLLWGIFYYLISALGITAG. Residues 118–216 lie on the Cytoplasmic side of the membrane; the sequence is AHRLWSHRTY…EKLVMFQRRY (99 aa). Fe cation-binding residues include His-119 and His-124. The Histidine box-1 signature appears at 119 to 124; the sequence is HRLWSH. Asn-147, Arg-154, and Asp-155 together coordinate substrate. Fe cation is bound by residues His-156, His-159, and His-160. A Histidine box-2 motif is present at residues 156-160; sequence HRAHH. Substrate-binding residues include Arg-187 and Lys-188. A helical transmembrane segment spans residues 217 to 236; the sequence is YKPGLLLMCFILPTLVPWYC. Topologically, residues 237-240 are lumenal; that stretch reads WGET. A helical transmembrane segment spans residues 241–262; that stretch reads FLHSLFVSTFLRYTLVLNATWL. Trp-261 provides a ligand contact to substrate. The Cytoplasmic segment spans residues 263-358; the sequence is VNSAAHLYGY…RTGDGSHKSS (96 aa). Fe cation-binding residues include His-268, His-297, His-300, and His-301. The short motif at 297–301 is the Histidine box-3 element; the sequence is HNYHH.

It belongs to the fatty acid desaturase type 1 family. Requires Fe(2+) as cofactor. Detected in liver (at protein level). Detected in adipose tissue. Detected in liver when rats are kept on a fat-free diet, but not when their food contains unsaturated fatty acids.

The protein resides in the endoplasmic reticulum membrane. It localises to the membrane. It carries out the reaction octadecanoyl-CoA + 2 Fe(II)-[cytochrome b5] + O2 + 2 H(+) = (9Z)-octadecenoyl-CoA + 2 Fe(III)-[cytochrome b5] + 2 H2O. Functionally, stearoyl-CoA desaturase that utilizes O(2) and electrons from reduced cytochrome b5 to introduce the first double bond into saturated fatty acyl-CoA substrates. Catalyzes the insertion of a cis double bond at the Delta-9 position into fatty acyl-CoA substrates including palmitoyl-CoA and stearoyl-CoA. Gives rise to a mixture of 16:1 and 18:1 unsaturated fatty acids. Plays an important role in lipid biosynthesis. Plays an important role in regulating the expression of genes that are involved in lipogenesis and in regulating mitochondrial fatty acid oxidation. Plays an important role in body energy homeostasis. Contributes to the biosynthesis of membrane phospholipids, cholesterol esters and triglycerides. Required for normal development of sebaceous glands. Required for the biosynthesis of normal levels of Delta-9 unsaturated fatty acids and 1-alkyl-2,3-diacylglycerol in the Harderian gland. Required for normal production of meibum, an oily material that prevents drying of the cornea. This chain is Acyl-CoA desaturase 1 (Scd1), found in Rattus norvegicus (Rat).